The primary structure comprises 301 residues: tRNA pseudouridine synthase B (301 aa).

Asp-47 (nucleophile) is an active-site residue.

This sequence belongs to the pseudouridine synthase TruB family. Type 1 subfamily.

It catalyses the reaction uridine(55) in tRNA = pseudouridine(55) in tRNA. Its function is as follows. Responsible for synthesis of pseudouridine from uracil-55 in the psi GC loop of transfer RNAs. This Cereibacter sphaeroides (strain ATCC 17025 / ATH 2.4.3) (Rhodobacter sphaeroides) protein is tRNA pseudouridine synthase B.